The following is a 355-amino-acid chain: Uroporphyrinogen decarboxylase (355 aa).

Substrate is bound by residues 27 to 31 (RQAGR), Asp77, Tyr154, Thr209, and His327.

It belongs to the uroporphyrinogen decarboxylase family. As to quaternary structure, homodimer.

It is found in the cytoplasm. It carries out the reaction uroporphyrinogen III + 4 H(+) = coproporphyrinogen III + 4 CO2. The protein operates within porphyrin-containing compound metabolism; protoporphyrin-IX biosynthesis; coproporphyrinogen-III from 5-aminolevulinate: step 4/4. Its function is as follows. Catalyzes the decarboxylation of four acetate groups of uroporphyrinogen-III to yield coproporphyrinogen-III. The sequence is that of Uroporphyrinogen decarboxylase from Yersinia enterocolitica serotype O:8 / biotype 1B (strain NCTC 13174 / 8081).